A 218-amino-acid chain; its full sequence is MRQPLRTIGLLGGTFDPIHYGHLRPAEEVREAVQLSELRLIPARIPPHRARPRVGPEQRAELVRRAVADNPSACVDERELHRDGPSYTVDTLAELRAELGGVSLCLILGYDTFLGLPGWSRWRQLFERAHVVVTERPGVRGALPEALATEVARRVAHEPAELRHRPAGCILFQAVTPVDISATGIRRSLALGRSVRYLLPEAVRQRVVEAGWYGYPQL.

Belongs to the NadD family.

It carries out the reaction nicotinate beta-D-ribonucleotide + ATP + H(+) = deamido-NAD(+) + diphosphate. Its pathway is cofactor biosynthesis; NAD(+) biosynthesis; deamido-NAD(+) from nicotinate D-ribonucleotide: step 1/1. Its function is as follows. Catalyzes the reversible adenylation of nicotinate mononucleotide (NaMN) to nicotinic acid adenine dinucleotide (NaAD). The sequence is that of Probable nicotinate-nucleotide adenylyltransferase from Halorhodospira halophila (strain DSM 244 / SL1) (Ectothiorhodospira halophila (strain DSM 244 / SL1)).